A 413-amino-acid chain; its full sequence is Falstatin (413 aa).

An N-terminal signal peptide occupies residues Met1–Cys21. The BC loop; binds and inhibits the active site cavity of cysteine proteases signature appears at Leu284 to Trp294. Composition is skewed to polar residues over residues Ile325–Thr339 and Asn346–His360. The tract at residues Ile325 to Gln367 is disordered.

Belongs to the protease inhibitor I71 family. Oligomer; probably composed of 10 monomers. Post-translationally, proteolytically cleaved.

Its subcellular location is the secreted. The protein resides in the cytoplasmic vesicle. It is found in the secretory vesicle. The protein localises to the microneme. It localises to the parasitophorous vacuole lumen. Its subcellular location is the host cytoplasm. Its function is as follows. Cysteine protease inhibitor. Inhibits cysteine protease falcipains FP2 and FP3. Required for the invasion of host erythrocytes by merozoites. In the mosquito vector, essential for the gliding motility of hemocoel sporozoites and, therefore, for salivary gland invasion and the subsequent transmission from the mosquito to the mammalian host. Required for the invasion of host hepatocytes. During the liver stage, may prevent host hepatocyte cell death likely by inhibiting host cysteine proteases. This is Falstatin from Plasmodium falciparum (isolate 3D7).